The sequence spans 430 residues: Glucose-6-phosphate isomerase (430 aa).

Catalysis depends on Glu-284, which acts as the Proton donor. Catalysis depends on residues His-305 and Lys-420.

The protein belongs to the GPI family.

Its subcellular location is the cytoplasm. It carries out the reaction alpha-D-glucose 6-phosphate = beta-D-fructose 6-phosphate. It functions in the pathway carbohydrate biosynthesis; gluconeogenesis. The protein operates within carbohydrate degradation; glycolysis; D-glyceraldehyde 3-phosphate and glycerone phosphate from D-glucose: step 2/4. Functionally, catalyzes the reversible isomerization of glucose-6-phosphate to fructose-6-phosphate. This is Glucose-6-phosphate isomerase from Mycoplasmopsis synoviae (strain 53) (Mycoplasma synoviae).